Consider the following 117-residue polypeptide: Ig heavy chain V region 3 (117 aa).

The signal sequence occupies residues 1 to 19 (MGWSCIILFLVATATGVHS). The tract at residues 20-49 (QVQLQQPGAELVRPGSSVKLSCKASGYTFT) is framework-1. Cysteine 41 and cysteine 115 are oxidised to a cystine. The segment at 50–54 (SYWMD) is complementarity-determining-1. The interval 55-68 (WVKQRPGQGLEWIG) is framework-2. Positions 69–85 (NIYPSDSETHYNQKFKD) are complementarity-determining-2. A framework-3 region spans residues 86 to 117 (KATLTVDKSSSTAYMQLSSLTSEDSAVYYCAR).

This Mus musculus (Mouse) protein is Ig heavy chain V region 3 (Ighv1-61).